Reading from the N-terminus, the 176-residue chain is ATP synthase subunit d, mitochondrial (176 aa).

In terms of assembly, F-type ATP synthases have 2 components, the catalytic core F(1) and the membrane-embedded component F(0), linked together by a central stalk and a peripheral stalk. The central stalk, also called rotor shaft, is often seen as part of F(1). The peripheral stalk is seen as part of F(0). F(0) contains the membrane channel next to the rotor. F-type ATP synthases form dimers but each monomer functions independently in ATP generation. The dimer consists of 17 different polypeptides: ATP1 (subunit alpha, 3 molecules per monomer, part of F(1)), ATP2 (subunit beta, 3 copies per monomer, part of F(1)), ATP3 (subunit gamma, part of the central stalk), ATP4 (subunit b, part of the peripheral stalk), ATP5/OSCP (subunit 5/OSCP, part of the peripheral stalk), ATP6 (subunit a, part of the peripheral stalk), ATP7 (subunit d, part of the peripheral stalk), ATP8 (subunit 8, part of the peripheral stalk), OLI1 (subunit c, part of the rotor, 10 molecules per monomer), ATP14 (subunit h, part of the peripheral stalk), ATP15 (subunit epsilon, part of the central stalk), ATP16 (subunit delta, part of the central stalk), ATP17 (subunit f, part of the peripheral stalk), ATP18 (subunit i/j, part of the peripheral stalk), ATP19 (subunit k, dimer-specific, at interface between monomers), ATP20 (subunit g, at interface between monomers), TIM11 (subunit e, at interface between monomers).

The protein resides in the mitochondrion inner membrane. Functionally, mitochondrial membrane ATP synthase (F(1)F(0) ATP synthase or Complex V) produces ATP from ADP in the presence of a proton gradient across the membrane which is generated by electron transport complexes of the respiratory chain. F-type ATP synthases consist of two structural domains, F(1) - containing the extramembraneous catalytic core, and F(0) - containing the membrane proton channel, linked together by a central stalk and a peripheral stalk. During catalysis, ATP synthesis in the catalytic domain of F(1) is coupled via a rotary mechanism of the central stalk subunits to proton translocation. Part of the complex F(0) domain and the peripheral stalk, which acts as a stator to hold the catalytic alpha/ATP1(3)beta/ATP2(3) subcomplex and subunit a/ATP6 static relative to the rotary elements. This chain is ATP synthase subunit d, mitochondrial, found in Yarrowia lipolytica (strain CLIB 122 / E 150) (Yeast).